Consider the following 485-residue polypeptide: N-succinylglutamate 5-semialdehyde dehydrogenase (485 aa).

Residue 220 to 225 (GSANTG) participates in NAD(+) binding. Active-site residues include glutamate 243 and cysteine 278.

This sequence belongs to the aldehyde dehydrogenase family. AstD subfamily.

It carries out the reaction N-succinyl-L-glutamate 5-semialdehyde + NAD(+) + H2O = N-succinyl-L-glutamate + NADH + 2 H(+). The protein operates within amino-acid degradation; L-arginine degradation via AST pathway; L-glutamate and succinate from L-arginine: step 4/5. Its function is as follows. Catalyzes the NAD-dependent reduction of succinylglutamate semialdehyde into succinylglutamate. The sequence is that of N-succinylglutamate 5-semialdehyde dehydrogenase from Vibrio atlanticus (strain LGP32) (Vibrio splendidus (strain Mel32)).